A 598-amino-acid polypeptide reads, in one-letter code: Serine hydroxymethyltransferase 7 (598 aa).

A disordered region spans residues Gln-57–Asp-85. Residues Gln-61 to Asp-85 are compositionally biased toward basic and acidic residues. Lys-370 carries the post-translational modification N6-(pyridoxal phosphate)lysine.

Belongs to the SHMT family. In terms of assembly, homotetramer. Pyridoxal 5'-phosphate serves as cofactor.

The protein localises to the cytoplasm. The catalysed reaction is (6R)-5,10-methylene-5,6,7,8-tetrahydrofolate + glycine + H2O = (6S)-5,6,7,8-tetrahydrofolate + L-serine. It participates in one-carbon metabolism; tetrahydrofolate interconversion. Functionally, catalyzes the interconversion of serine and glycine. This chain is Serine hydroxymethyltransferase 7 (SHM7), found in Arabidopsis thaliana (Mouse-ear cress).